A 742-amino-acid polypeptide reads, in one-letter code: F-box only protein 30 (742 aa).

The segment at 49-108 (EHRLLCPFERVPCLNSNFGCPFTLARNKVAEHLEMCPASVVCCTMEWNRWPVSYSDRKSY) adopts a TRAF-type zinc-finger fold. Positions 214-242 (SLQGTTNEMDEESNRESSQDRNAKDQDHL) are disordered. Over residues 225–242 (ESNRESSQDRNAKDQDHL) the composition is skewed to basic and acidic residues. At serine 379 the chain carries Phosphoserine. The region spanning 607-653 (SDHLSSLPFEVLQHIAGFLDGFSLCQLACVSRLMRDICGSLLQSRGM) is the F-box domain.

As to quaternary structure, part of a SCF (SKP1-cullin-F-box) protein ligase complex. Interacts with SKP1, CUL1 and RBX1/ROC1. In terms of processing, auto-ubiquitinated. Post-translationally, may be neddylated. Neddylation may be required for E3 ligase activity.

It functions in the pathway protein modification; protein ubiquitination. In terms of biological role, substrate-recognition component of the SCF (SKP1-CUL1-F-box protein)-type E3 ubiquitin ligase complex. Required for muscle atrophy following denervation. The polypeptide is F-box only protein 30 (Fbxo30) (Rattus norvegicus (Rat)).